The chain runs to 394 residues: Methylthioribose kinase (394 aa).

ATP is bound by residues asparagine 44, lysine 61, and 115-117; that span reads EDL. Aspartate 233 is a binding site for substrate. Position 250–252 (250–252) interacts with ATP; it reads DPE. Position 337 (arginine 337) interacts with substrate.

It belongs to the methylthioribose kinase family. As to quaternary structure, homodimer.

It catalyses the reaction 5-(methylsulfanyl)-D-ribose + ATP = 5-(methylsulfanyl)-alpha-D-ribose 1-phosphate + ADP + H(+). It functions in the pathway amino-acid biosynthesis; L-methionine biosynthesis via salvage pathway; S-methyl-5-thio-alpha-D-ribose 1-phosphate from S-methyl-5'-thioadenosine (hydrolase route): step 2/2. Its function is as follows. Catalyzes the phosphorylation of methylthioribose into methylthioribose-1-phosphate. This chain is Methylthioribose kinase, found in Bacillus velezensis (strain DSM 23117 / BGSC 10A6 / LMG 26770 / FZB42) (Bacillus amyloliquefaciens subsp. plantarum).